The following is a 53-amino-acid chain: UPF0391 membrane protein Ent638_0536 (53 aa).

The next 2 helical transmembrane spans lie at Trp-4 to Ala-24 and Ala-27 to Phe-47.

It belongs to the UPF0391 family.

The protein resides in the cell membrane. This chain is UPF0391 membrane protein Ent638_0536, found in Enterobacter sp. (strain 638).